Consider the following 342-residue polypeptide: Dihydroorotate dehydrogenase (quinone) (342 aa).

FMN is bound by residues 65–69 (AGLDK) and threonine 89. Residue lysine 69 participates in substrate binding. 114 to 118 (NRMGF) is a substrate binding site. FMN contacts are provided by asparagine 142 and asparagine 175. Asparagine 175 contributes to the substrate binding site. The Nucleophile role is filled by serine 178. Asparagine 180 is a substrate binding site. Residues lysine 220 and threonine 248 each contribute to the FMN site. Substrate is bound at residue 249–250 (NT). FMN contacts are provided by residues glycine 271, glycine 300, and 321–322 (YT).

It belongs to the dihydroorotate dehydrogenase family. Type 2 subfamily. As to quaternary structure, monomer. FMN is required as a cofactor.

The protein localises to the cell membrane. The catalysed reaction is (S)-dihydroorotate + a quinone = orotate + a quinol. The protein operates within pyrimidine metabolism; UMP biosynthesis via de novo pathway; orotate from (S)-dihydroorotate (quinone route): step 1/1. Its function is as follows. Catalyzes the conversion of dihydroorotate to orotate with quinone as electron acceptor. The protein is Dihydroorotate dehydrogenase (quinone) of Burkholderia pseudomallei (strain K96243).